The following is a 526-amino-acid chain: Delayed-rectifier potassium channel regulatory subunit KCNS1 (526 aa).

At 1 to 217 (MLMLLVRGTH…LTMENPGYSL (217 aa)) the chain is on the cytoplasmic side. Residues 218 to 239 (PSKLFSCVSISVVLASIAAMCI) traverse the membrane as a helical segment. Residues 240–270 (HSLPEYQAREAAAAVAAVAAGRSPEGVRDDP) are Extracellular-facing. Residues 271-293 (VLRRLEYFCIAWFSFEVSSRLLL) form a helical membrane-spanning segment. Over 294 to 304 (APSTRNFFCHP) the chain is Cytoplasmic. A helical membrane pass occupies residues 305 to 322 (LNLIDIVSVLPFYLTLLA). The Extracellular segment spans residues 323 to 337 (GVALGDQGGKEFGHL). The helical; Voltage-sensor transmembrane segment at 338–358 (GKVVQVFRLMRIFRVLKLARH) threads the bilayer. Over 359–373 (STGLRSLGATLKHSY) the chain is Cytoplasmic. Residues 374-395 (REVGILLLYLAVGVSVFSGVAY) form a helical membrane-spanning segment. At 396 to 408 (TAEKEEDVGFNTI) the chain is on the extracellular side. Residues 409–420 (PACWWWGTVSMT) constitute an intramembrane region (helical). Residues 421–426 (TVGYGD) carry the Selectivity filter motif. Residues 421 to 428 (TVGYGDVV) lie within the membrane without spanning it. At 429-435 (PVTVAGK) the chain is on the extracellular side. A helical transmembrane segment spans residues 436-464 (LAASGCILGGILVVALPITIIFNKFSHFY). Topologically, residues 465 to 526 (RRQKALEAAV…PSEPPHPQMY (62 aa)) are cytoplasmic. The disordered stretch occupies residues 491–526 (GVSEASLETSRETSQEGRSADLESQAPSEPPHPQMY). A compositionally biased stretch (basic and acidic residues) spans 499–511 (TSRETSQEGRSAD).

Belongs to the potassium channel family. S (TC 1.A.1.2) subfamily. Kv9.1/KCNS1 sub-subfamily. Heterotetramer with KCNB1. Heterotetramer with KCNB2. Does not form homomultimers.

Its subcellular location is the cell membrane. Its function is as follows. Potassium channel regulatory subunit that modulate the delayed rectifier voltage-gated potassium channel activity of KCNB1 and KCNB2 by altering their kinetics, expression levels, and shifting the half-inactivation potential to more polarized values. While it does not form functional channels on its own, it can form functional heterotetrameric channels with KCNB1 and KCNB2. Each regulatory subunit has unique regulatory properties that can lead to extensive inhibition, significant changes in kinetics, and/or substantial shifts in the voltage dependencies of the inactivation process. In Pan troglodytes (Chimpanzee), this protein is Delayed-rectifier potassium channel regulatory subunit KCNS1.